Reading from the N-terminus, the 1643-residue chain is Lysine-specific demethylase 6B (1643 aa).

Disordered stretches follow at residues 52–88, 190–680, 704–807, and 822–1096; these read GQPP…PLHG, AKRG…PLED, ESIR…LKSL, and GAAV…RSLS. Composition is skewed to low complexity over residues 63–74 and 212–223; these read SHGSSSGHPSKP and AALSGPSGEEGL. Residue serine 224 is modified to Phosphoserine. Residues 242-266 are compositionally biased toward pro residues; the sequence is PGLPLPPPPLPPPPPPPPPPPPPLP. Positions 291–307 are enriched in basic and acidic residues; the sequence is GPERKGSAPPERQEQRH. The span at 332–342 shows a compositional bias: pro residues; sequence AAPPGPGPRPP. A compositionally biased stretch (basic and acidic residues) spans 359–370; it reads DLRESRVQRSRM. Positions 394-412 are enriched in low complexity; the sequence is PGTTTSSSSSSSSNTGLRG. A compositionally biased stretch (pro residues) spans 460–484; sequence SLPPGPSSPPPPPCPRLLRPPPPPA. Low complexity predominate over residues 550–569; it reads TTSSSNSNSGSHSSSPAGPV. Pro residues-rich tracts occupy residues 584–600 and 641–658; these read LPRP…PPLV and GPGP…PVPP. Over residues 704 to 714 the composition is skewed to basic and acidic residues; the sequence is ESIRKEEEQQQ. Positions 740-764 are enriched in low complexity; sequence TAPTTTAPAVAVTTTTTTTTTTTAT. Positions 772-800 are enriched in pro residues; that stretch reads PPALPPPPPLAKFPPPSQPQPPPPPPPSP. The span at 843-877 shows a compositional bias: low complexity; the sequence is SGATALPPTSAAPSAQGSPQPSASSSSQFSTSGGP. Positions 889–904 are enriched in pro residues; the sequence is VPGPMTPTQPPPPLSL. Over residues 916–929 the composition is skewed to basic and acidic residues; it reads EISRACETLVERVG. Residues 972-989 are compositionally biased toward basic residues; the sequence is CKRRQKEHQKEHRRHRRA. Over residues 990–1003 the composition is skewed to basic and acidic residues; it reads CKDSVGRRPREGRA. The span at 1004 to 1016 shows a compositional bias: basic residues; it reads KAKAKVPKEKSRR. The segment covering 1047 to 1067 has biased composition (pro residues); sequence PTAPAPPSAPAPSAQPTPPSA. Lysine 1109 is covalently cross-linked (Glycyl lysine isopeptide (Lys-Gly) (interchain with G-Cter in SUMO2)). The disordered stretch occupies residues 1288-1325; the sequence is FQESLQEEKESEDEESEEPDSTTGTPPSSAPDPKNHHI. Residues 1296 to 1307 show a composition bias toward acidic residues; that stretch reads KESEDEESEEPD. In terms of domain architecture, JmjC spans 1339–1502; it reads RWKPQLQELL…YQLALERYEW (164 aa). Fe cation-binding residues include histidine 1390, glutamate 1392, and histidine 1470. Positions 1575, 1578, 1602, and 1605 each coordinate Zn(2+).

This sequence belongs to the UTX family. Interacts with TLE1. Component of the MLL4 complex, at least composed of KMT2B/MLL4, ASH2L, RBBP5, WDR5, and KDM6B. Interacts with TBX21, SMARCA4, SMARCC1 and SMARCC2. L-ascorbate is required as a cofactor. Fe(2+) serves as cofactor.

It localises to the nucleus. The catalysed reaction is N(6),N(6),N(6)-trimethyl-L-lysyl(27)-[histone H3] + 2 2-oxoglutarate + 2 O2 = N(6)-methyl-L-lysyl(27)-[histone H3] + 2 formaldehyde + 2 succinate + 2 CO2. Histone demethylase that specifically demethylates 'Lys-27' of histone H3, thereby playing a central role in histone code. Demethylates trimethylated and dimethylated H3 'Lys-27'. Plays a central role in regulation of posterior development, by regulating HOX gene expression. Involved in inflammatory response by participating in macrophage differentiation in case of inflammation by regulating gene expression and macrophage differentiation. Plays a demethylase-independent role in chromatin remodeling to regulate T-box family member-dependent gene expression by acting as a link between T-box factors and the SMARCA4-containing SWI/SNF remodeling complex. The polypeptide is Lysine-specific demethylase 6B (KDM6B) (Homo sapiens (Human)).